A 304-amino-acid polypeptide reads, in one-letter code: Polyisoprenyl-teichoic acid--peptidoglycan teichoic acid transferase TagU (304 aa).

The Cytoplasmic segment spans residues 1 to 4 (MKKK). Residues 5–25 (ILFWILGIIGILIIGGGAYAY) traverse the membrane as a helical; Signal-anchor for type II membrane protein segment. Topologically, residues 26–304 (SIYSSVSKTL…KLRAHLEVTK (279 aa)) are extracellular.

Belongs to the LytR/CpsA/Psr (LCP) family.

The protein localises to the cell membrane. Its pathway is cell wall biogenesis. Functionally, may catalyze the final step in cell wall teichoic acid biosynthesis, the transfer of the anionic cell wall polymers (APs) from their lipid-linked precursor to the cell wall peptidoglycan (PG). This chain is Polyisoprenyl-teichoic acid--peptidoglycan teichoic acid transferase TagU, found in Bacillus cereus (strain ATCC 14579 / DSM 31 / CCUG 7414 / JCM 2152 / NBRC 15305 / NCIMB 9373 / NCTC 2599 / NRRL B-3711).